The chain runs to 342 residues: MENRMVTPFDVEDDKEQYSLRPTTLKEYIGQKKVKANLDIFIKAAKKRNESLDHVLFYGPPGLGKTTLANIIANEMTGNLKVTSGPAIEKAGDLAAILTSLTDYDVLFIDEIHRLNRSIEEILYPAMEDYALDIVIGKGAAAKSIRLDLPKFTLIGATTRVGLLTSPLRDRFGMLCAMEFYTDEELMEIVVRSAAILNVNICREAAFEIGKRSRGTPRIANRLLKRVRDYCDVKHDGDIDLQGAKAALDLLEVDKEGLDKIDNKILEAIIFNFKGGPVGLETLAYFIGEELDTIEDVYEPYLIQKGFIMRTPRGRVASEKAYNHFGVTKKEEKDNQVSIFNK.

Residues 1-181 are large ATPase domain (RuvB-L); the sequence is MENRMVTPFD…FGMLCAMEFY (181 aa). ATP is bound by residues L20, R21, G62, K65, T66, T67, 128–130, R171, Y181, and R218; that span reads EDY. T66 provides a ligand contact to Mg(2+). A small ATPAse domain (RuvB-S) region spans residues 182–252; that stretch reads TDEELMEIVV…GAKAALDLLE (71 aa). The head domain (RuvB-H) stretch occupies residues 255–342; that stretch reads KEGLDKIDNK…KDNQVSIFNK (88 aa). DNA contacts are provided by R310 and R315.

This sequence belongs to the RuvB family. In terms of assembly, homohexamer. Forms an RuvA(8)-RuvB(12)-Holliday junction (HJ) complex. HJ DNA is sandwiched between 2 RuvA tetramers; dsDNA enters through RuvA and exits via RuvB. An RuvB hexamer assembles on each DNA strand where it exits the tetramer. Each RuvB hexamer is contacted by two RuvA subunits (via domain III) on 2 adjacent RuvB subunits; this complex drives branch migration. In the full resolvosome a probable DNA-RuvA(4)-RuvB(12)-RuvC(2) complex forms which resolves the HJ.

It is found in the cytoplasm. It catalyses the reaction ATP + H2O = ADP + phosphate + H(+). Its function is as follows. The RuvA-RuvB-RuvC complex processes Holliday junction (HJ) DNA during genetic recombination and DNA repair, while the RuvA-RuvB complex plays an important role in the rescue of blocked DNA replication forks via replication fork reversal (RFR). RuvA specifically binds to HJ cruciform DNA, conferring on it an open structure. The RuvB hexamer acts as an ATP-dependent pump, pulling dsDNA into and through the RuvAB complex. RuvB forms 2 homohexamers on either side of HJ DNA bound by 1 or 2 RuvA tetramers; 4 subunits per hexamer contact DNA at a time. Coordinated motions by a converter formed by DNA-disengaged RuvB subunits stimulates ATP hydrolysis and nucleotide exchange. Immobilization of the converter enables RuvB to convert the ATP-contained energy into a lever motion, pulling 2 nucleotides of DNA out of the RuvA tetramer per ATP hydrolyzed, thus driving DNA branch migration. The RuvB motors rotate together with the DNA substrate, which together with the progressing nucleotide cycle form the mechanistic basis for DNA recombination by continuous HJ branch migration. Branch migration allows RuvC to scan DNA until it finds its consensus sequence, where it cleaves and resolves cruciform DNA. In Clostridium botulinum (strain Loch Maree / Type A3), this protein is Holliday junction branch migration complex subunit RuvB.